We begin with the raw amino-acid sequence, 609 residues long: Probable G-protein coupled receptor 153 (609 aa).

At Met1–Ala11 the chain is on the extracellular side. The helical transmembrane segment at Val12–Val32 threads the bilayer. At Gly33–Pro41 the chain is on the cytoplasmic side. Residues Leu42 to Ala62 traverse the membrane as a helical segment. The Extracellular segment spans residues Thr63 to Lys84. The helical transmembrane segment at Val85 to Ser105 threads the bilayer. Topologically, residues Tyr106–Gln126 are cytoplasmic. The helical transmembrane segment at Ala127–Val147 threads the bilayer. Residues Gly148–Cys175 are Extracellular-facing. The chain crosses the membrane as a helical span at residues Phe176–Phe196. Residues Gln197 to Thr243 lie on the Cytoplasmic side of the membrane. Residues Gly244–Val264 traverse the membrane as a helical segment. Over Ser265–Pro276 the chain is Extracellular. A helical membrane pass occupies residues Trp277–Leu297. Over Trp298–Ser609 the chain is Cytoplasmic. Disordered regions lie at residues Asp446 to Ala496 and Ala514 to Ser609. Composition is skewed to low complexity over residues Glu458 to Pro479 and Ala527 to Glu536. Residues Glu571–Ser583 show a composition bias toward gly residues. Residues Thr584–Gly596 show a composition bias toward low complexity.

This sequence belongs to the G-protein coupled receptor 1 family.

The protein localises to the cell membrane. Orphan receptor. In Homo sapiens (Human), this protein is Probable G-protein coupled receptor 153 (GPR153).